We begin with the raw amino-acid sequence, 300 residues long: Ribosomal protein L11 methyltransferase (300 aa).

4 residues coordinate S-adenosyl-L-methionine: T152, G173, D195, and N234.

It belongs to the methyltransferase superfamily. PrmA family.

The protein resides in the cytoplasm. The catalysed reaction is L-lysyl-[protein] + 3 S-adenosyl-L-methionine = N(6),N(6),N(6)-trimethyl-L-lysyl-[protein] + 3 S-adenosyl-L-homocysteine + 3 H(+). Methylates ribosomal protein L11. This Burkholderia ambifaria (strain MC40-6) protein is Ribosomal protein L11 methyltransferase.